Consider the following 458-residue polypeptide: Protein amnionless (458 aa).

An N-terminal signal peptide occupies residues 1-19 (MGALGRVLLWLQLCAMTRA). The Extracellular portion of the chain corresponds to 20-362 (AYKLWVPNTS…ELNQSSSGAG (343 aa)). A glycan (N-linked (GlcNAc...) asparagine) is linked at N27. Disulfide bonds link C43/C96, C137/C213, C205/C211, C223/C249, C234/C250, and C239/C253. The segment at 67–87 (SDMLLPLDGELVLASGAALSA) is interaction with CUBN. Residues 203–254 (QACTDASGCVCGNAEMLPWICASLLQPLGGRCPQAACQDPLLPQGQCCDLCG) form the VWFC domain. N355 carries N-linked (GlcNAc...) asparagine glycosylation. The helical transmembrane segment at 363–383 (LAGGVAALVLLALLGTVLLLL) threads the bilayer. Topologically, residues 384–458 (HRSGRLRWRR…LFAGEAEAEA (75 aa)) are cytoplasmic.

As to quaternary structure, interacts (via extracellular region) with CUBN/cubilin. This gives rise to a huge complex containing one AMN chain and three CUBN chains. In terms of processing, N-glycosylated. A soluble form arises by proteolytic removal of the membrane anchor. Expressed in polarized epithelial cells which are specialized in resorption or transport, specifically kidney proximal tubules and intestinal epithelium.

Its subcellular location is the apical cell membrane. It is found in the cell membrane. The protein resides in the endosome membrane. The protein localises to the membrane. It localises to the coated pit. Its function is as follows. Membrane-bound component of the endocytic receptor formed by AMN and CUBN. Required for normal CUBN glycosylation and trafficking to the cell surface. The complex formed by AMN and CUBN is required for efficient absorption of vitamin B12. Required for normal CUBN-mediated protein transport in the kidney. This chain is Protein amnionless (Amn), found in Mus musculus (Mouse).